The following is a 363-amino-acid chain: MSYSISQIAKALGAEAAGNLDLTVTGAAEPGDAGHDQLALAMSPKYAEALAKGGARAAILWPGAAWQAMGLEAAIFAARPRLAMAGLTAMLDPGQGVASGIHPSAVIDPSAEIGADVSIGPLTVVGARARIGAGSVIGPHCVIGMDAVLGEGAWLREMVSIGARATIGARFIAQPGARIGGDGFSFVTPEVSGAENARKTMGDQGEAKAQAWTRIHSLGAVEIGDDVEVGANCTVDNGTIRNTCIGDGSKLDNLVHVGHNTRIGRDCLLCGQTGVSGSVEIGNNVVLGGQTGVVDNIYIGDGVIAGGGSKILSNVPAGRVIMGYPAVKMDLHTEIYKAQRRLPRLLRDISALKKAVSKPGPSE.

The active-site Proton acceptor is His-259.

The protein belongs to the transferase hexapeptide repeat family. LpxD subfamily. Homotrimer.

The enzyme catalyses a UDP-3-O-[(3R)-3-hydroxyacyl]-alpha-D-glucosamine + a (3R)-hydroxyacyl-[ACP] = a UDP-2-N,3-O-bis[(3R)-3-hydroxyacyl]-alpha-D-glucosamine + holo-[ACP] + H(+). The protein operates within bacterial outer membrane biogenesis; LPS lipid A biosynthesis. Catalyzes the N-acylation of UDP-3-O-acylglucosamine using 3-hydroxyacyl-ACP as the acyl donor. Is involved in the biosynthesis of lipid A, a phosphorylated glycolipid that anchors the lipopolysaccharide to the outer membrane of the cell. The chain is UDP-3-O-acylglucosamine N-acyltransferase from Ruegeria pomeroyi (strain ATCC 700808 / DSM 15171 / DSS-3) (Silicibacter pomeroyi).